The chain runs to 709 residues: Ribosomal RNA large subunit methyltransferase K/L (709 aa).

The region spanning 43 to 154 (LAYRITLWTR…NGVITIAMNF (112 aa)) is the THUMP domain.

Belongs to the methyltransferase superfamily. RlmKL family.

It localises to the cytoplasm. It carries out the reaction guanosine(2445) in 23S rRNA + S-adenosyl-L-methionine = N(2)-methylguanosine(2445) in 23S rRNA + S-adenosyl-L-homocysteine + H(+). The enzyme catalyses guanosine(2069) in 23S rRNA + S-adenosyl-L-methionine = N(2)-methylguanosine(2069) in 23S rRNA + S-adenosyl-L-homocysteine + H(+). In terms of biological role, specifically methylates the guanine in position 2445 (m2G2445) and the guanine in position 2069 (m7G2069) of 23S rRNA. The sequence is that of Ribosomal RNA large subunit methyltransferase K/L from Shewanella sp. (strain W3-18-1).